We begin with the raw amino-acid sequence, 628 residues long: tRNA uridine 5-carboxymethylaminomethyl modification enzyme MnmG (628 aa).

FAD contacts are provided by residues 14–19 (GAGHAG), Val126, and Ser181. 273 to 287 (GPRYCPSIEDKVVRF) contacts NAD(+). Gln370 is a binding site for FAD.

Belongs to the MnmG family. In terms of assembly, homodimer. Heterotetramer of two MnmE and two MnmG subunits. FAD serves as cofactor.

It is found in the cytoplasm. NAD-binding protein involved in the addition of a carboxymethylaminomethyl (cmnm) group at the wobble position (U34) of certain tRNAs, forming tRNA-cmnm(5)s(2)U34. The protein is tRNA uridine 5-carboxymethylaminomethyl modification enzyme MnmG of Bacillus licheniformis (strain ATCC 14580 / DSM 13 / JCM 2505 / CCUG 7422 / NBRC 12200 / NCIMB 9375 / NCTC 10341 / NRRL NRS-1264 / Gibson 46).